The sequence spans 157 residues: 2-C-methyl-D-erythritol 2,4-cyclodiphosphate synthase (157 aa).

A divalent metal cation is bound by residues aspartate 8 and histidine 10. 4-CDP-2-C-methyl-D-erythritol 2-phosphate contacts are provided by residues 8 to 10 (DVH) and 34 to 35 (HS). Histidine 42 is a binding site for a divalent metal cation. 4-CDP-2-C-methyl-D-erythritol 2-phosphate contacts are provided by residues 56 to 58 (DIG), 61 to 65 (FPDTD), 100 to 106 (AQAPKMA), 132 to 135 (TTTE), phenylalanine 139, and arginine 142.

This sequence belongs to the IspF family. In terms of assembly, homotrimer. The cofactor is a divalent metal cation.

It carries out the reaction 4-CDP-2-C-methyl-D-erythritol 2-phosphate = 2-C-methyl-D-erythritol 2,4-cyclic diphosphate + CMP. The protein operates within isoprenoid biosynthesis; isopentenyl diphosphate biosynthesis via DXP pathway; isopentenyl diphosphate from 1-deoxy-D-xylulose 5-phosphate: step 4/6. In terms of biological role, involved in the biosynthesis of isopentenyl diphosphate (IPP) and dimethylallyl diphosphate (DMAPP), two major building blocks of isoprenoid compounds. Catalyzes the conversion of 4-diphosphocytidyl-2-C-methyl-D-erythritol 2-phosphate (CDP-ME2P) to 2-C-methyl-D-erythritol 2,4-cyclodiphosphate (ME-CPP) with a corresponding release of cytidine 5-monophosphate (CMP). The sequence is that of 2-C-methyl-D-erythritol 2,4-cyclodiphosphate synthase from Pseudomonas aeruginosa (strain UCBPP-PA14).